The sequence spans 995 residues: DADLAAVYRAVASLADETVRTMAIPLLSTGTFAGGKDRVLQSLNHLFTALDTTDVDVTIYCRDKSWEKKIQEAIDMRTATELLDDDTTVMKELTRVHPDSCLVGRSGFSTVDGRLHSYLEGTRFHQTAVDVAERPTLWPRREEANEQITHYVLGESMEAIRTKCPVDDTDSSAPPCTVPCLCRYAMTPERVHRLRAAQVKQFTVCSSFPLPKYKIPGVQRVACSAVMLFNHDVPALVSPRKYREPSISSESSSSGLSVFDLDIGSDSEYEPMEPVQPEPLIDLAVVEETAPVRLERVAPVAAPRRARATPFTLEQRVVAPVPAPRTMPVRPPRRKKAATRTPERISFGDLDAECMAIINDDLTFGDFGAGEFERLTSAXLDRAGAYIFSSDTGPGHLQQRSVRQTRLADCVAEDVHEERVFAPKCDKEKERLLLLQMQMAPTEANKSRYQSRKVENMKAEVIDRLLGGAKLFVTPTTDCRYVTHKHPKPMYSTSVAFYLSSAKTAVAACNEFLSRNYPTVTSYQITDEYDAYLDMVDGSESCLDRAAFCPSKLRSFPKKHSYHRAEIRSAVPSPFQNTLQNVLAAATKRNCNVTQMRELPTLDSAVFNVECFKKYACNNDYWDEFAQKPIRLTTENITSYVTRLKGPKAAALFAKTYDLKPLQEVPMDRFVVDMKRDVKVTPGTKHTEERPKVQVIQAAEPLATAYLCGIHRELVRRLNAVLLPNVHTLFDMSAEDFDAIISEHFRPGDAVLETDIASFDKSQDDSLAYTGLMLLEDLGVDQPLLELIEASFGEITSTHLPTGTRFKFGAMMKSGMFLTLFVNTMLNMTIASRVLEERLTNSKCAAFIGDDNIVHGVKSDKLLAERCAAWMNMEVKIIDAVMCERPPYFCGGFIVFDQVTGTCCRVADPLKRLFKLGKPLPAEDKQDEDRRRALADEAQRWNRVGIQADLEAAMNSRYEVEGIRNVITALTTLSRNYHNFRHLRGPVIDLYGGPK.

The ADP-D-ribose site is built by Gly-30 and Phe-32. Zn(2+) is bound by residues Cys-180, Cys-182, Cys-205, and Cys-223. Short sequence motifs (FGDF; binding to host G3BP1) lie at residues 347–350 (FGDL) and 364–367 (FGDF). The RdRp catalytic domain occupies 749 to 864 (DAVLETDIAS…HGVKSDKLLA (116 aa)).

In terms of assembly, interacts with mRNA-capping enzyme nsP1. Interacts with host DDX1. Interacts with host DDX3. Interacts (via C-terminus) with host G3BP1; this interaction inhibits the formation of host stress granules on viral mRNAs and the nsp3-G3BP1 complexes bind viral RNAs and probably orchestrate the assembly of viral replication complexes. Interacts (via C-terminus) with host G3BP2; this interaction inhibits the formation of host stress granules on viral mRNAs and the nsp3-G3BP2 complexes bind viral RNAs and probably orchestrate the assembly of viral replication complexes. Interacts with mRNA-capping enzyme nsP1. Interacts with protease nsP2. interacts with itself. Requires Mg(2+) as cofactor. The cofactor is Mn(2+). Post-translationally, polyprotein P1234: Specific enzymatic cleavages in vivo yield mature proteins. The processing of the polyprotein is temporally regulated. In early stages (1.7 hpi), P1234 is first cleaved in trans through its nsP2 protease activity, releasing P123' and nsP4, which associate to form the early replication complex. At the same time, P1234 is also cut at the nsP1/nsP2 site early in infection but with lower efficiency. After replication of the viral minus-strand RNAs (4 hpi), the polyproteins are cut at the nsP1/nsP2 and nsP2/nsP3 sites very efficiently, preventing accumulation of P123' and P1234 and allowing the formation of the late replication complex. NsP3'/nsP4 site is not cleaved anymore and P34 is produced rather than nsP4. Specific enzymatic cleavages in vivo yield mature proteins. The processing of the polyprotein is temporally regulated. In early stages (1.7 hpi), P123 is cleaved at the nsP1/nsP2 site with low efficiency. After replication of the viral minus-strand RNAs (4 hpi), the polyproteins are cut at the nsP1/nsP2 and nsP2/nsP3 sites very efficiently, preventing accumulation of P123 and allowing the formation of the late replication complex. In terms of processing, specific enzymatic cleavages in vivo yield mature proteins. The processing of the polyprotein is temporally regulated. In early stages (1.7 hpi), P123' is cleaved at the nsP1/nsP2 site with low efficiency. After replication of the viral minus-strand RNAs (4 hpi), the polyproteins are cut at the nsP1/nsP2 and nsP2/nsP3 sites very efficiently, preventing accumulation of P123' and allowing the formation of the late replication complex. Post-translationally, phosphorylated by host on serines and threonines. Ubiquitinated; targets the protein for rapid degradation via the ubiquitin system. Nsp4 is present in extremely low quantities due to low frequency of translation through the amber stop-codon and the degradation by the ubiquitin pathway.

It is found in the host cytoplasmic vesicle membrane. It catalyses the reaction RNA(n) + a ribonucleoside 5'-triphosphate = RNA(n+1) + diphosphate. The enzyme catalyses RNA(n) + ATP = RNA(n)-3'-adenine ribonucleotide + diphosphate. The catalysed reaction is 4-O-(ADP-D-ribosyl)-L-aspartyl-[protein] + H2O = L-aspartyl-[protein] + ADP-D-ribose + H(+). It carries out the reaction 5-O-(ADP-D-ribosyl)-L-glutamyl-[protein] + H2O = L-glutamyl-[protein] + ADP-D-ribose + H(+). It catalyses the reaction ADP-alpha-D-ribose 1''-phosphate + H2O = ADP-D-ribose + phosphate. Its function is as follows. Polyprotein P1234: Inactive precursor of the viral replicase, which is activated by cleavages carried out by the viral protease nsP2. The early replication complex formed by the polyprotein P123 and nsP4 synthesizes minus-strand RNAs. As soon P123 is cleaved into mature proteins, the plus-strand RNAs synthesis begins. Functionally, the early replication complex formed by the polyprotein P123' and nsP4 synthesizes minus-strand RNAs. Polyprotein P123' is a short-lived polyprotein that accumulates during early stage of infection. As soon P123' is cleaved into mature proteins, the plus-strand RNAs synthesis begins. In terms of biological role, seems to be essential for minus-strand RNAs and subgenomic 26S mRNAs synthesis. Displays mono-ADP-ribosylhydrolase activity. ADP-ribosylation is a post-translational modification that controls various processes of the host cell and the virus probably needs to revert it for optimal viral replication. Binds proteins of FXR family and sequesters them into the viral RNA replication complexes thereby inhibiting the formation of host stress granules on viral mRNAs. The nsp3'-FXR complexes bind viral RNAs and probably orchestrate the assembly of viral replication complexes, thanks to the ability of FXR family members to self-assemble and bind DNA. Its function is as follows. Seems to be essential for minus-strand RNAs and subgenomic 26S mRNAs synthesis. Displays mono-ADP-ribosylhydrolase activity. ADP-ribosylation is a post-translantional modification that controls various processes of the host cell and the virus probably needs to revert it for optimal viral replication. Binds proteins of G3BP family and sequesters them into the viral RNA replication complexes thereby inhibiting the formation of host stress granules on viral mRNAs. The nsp3-G3BP complexes bind viral RNAs and probably orchestrate the assembly of viral replication complexes, thanks to the ability of G3BP family members to self-assemble and bind DNA. RNA dependent RNA polymerase. Replicates genomic and antigenomic RNA by recognizing replications specific signals. The early replication complex formed by the polyprotein P123 and nsP4 synthesizes minus-strand RNAs. The late replication complex composed of fully processed nsP1-nsP4 is responsible for the production of genomic and subgenomic plus-strand RNAs. The core catalytic domain of nsP4 also possesses terminal adenylyltransferase (TATase) activity that is probably involved in maintenance and repair of the poly(A) tail, an element required for replication of the viral genome. This is Polyprotein nsP1234 from Middelburg virus.